We begin with the raw amino-acid sequence, 1294 residues long: ATPase PglY (1294 aa).

The interval 1205–1263 is disordered; that stretch reads TQAAATPPPAPAASQPTAGDLSLDTPTSDPRIPYTSQETPTSSGGAGTARTSGGRRTTA. A compositionally biased stretch (polar residues) spans 1228–1244; the sequence is DTPTSDPRIPYTSQETP. A compositionally biased stretch (low complexity) spans 1252-1263; the sequence is TARTSGGRRTTA.

BREX systems (bacteriophage exclusion) provide immunity against bacteriophage. Part of a type 2 BREX system. Previously called the phage growth limitation (Pgl) system, it confers protection against bacteriophage phiC31. The bacteria allows one cycle of phage infection, but subsequent cycles are impaired, protecting the original bacterial colony. The system undergoes high rates (10(-3) to 10(-4)) of phase reversion, i.e. loss and regain of phiC31 resistance. When the pglW-pglX-pglY-pglZ genes are transformed into a susceptible S.lividans (strain 1326) they confer resistance to infection by phage phiC31 and phiBT1; all 4 genes are necessary. In terms of biological role, hydrolyzes ATP but not AMP, ADP, GMP, GDP or GTP; activity is inhibited by the non-hydrolyzable ATP analog 5-adenylyl beta,gamma-imidodiphosphate. This chain is ATPase PglY, found in Streptomyces coelicolor (strain ATCC BAA-471 / A3(2) / M145).